Here is an 88-residue protein sequence, read N- to C-terminus: Small ribosomal subunit protein bS20 (88 aa).

A disordered region spans residues 1–25 (MANSAQARKRVRQNNTRRQHAASQR). The segment covering 7 to 20 (ARKRVRQNNTRRQH) has biased composition (basic residues).

This sequence belongs to the bacterial ribosomal protein bS20 family.

Binds directly to 16S ribosomal RNA. The polypeptide is Small ribosomal subunit protein bS20 (Psychrobacter sp. (strain PRwf-1)).